A 240-amino-acid polypeptide reads, in one-letter code: ATP-dependent dethiobiotin synthetase BioD (240 aa).

13-18 (GVGKTI) is a binding site for ATP. Thr-17 contributes to the Mg(2+) binding site. Lys-38 is a catalytic residue. Position 42 (Thr-42) interacts with substrate. Residues Asp-55, 116-119 (EGVG), and 214-216 (PYL) contribute to the ATP site. Mg(2+) is bound by residues Asp-55 and Glu-116.

Belongs to the dethiobiotin synthetase family. As to quaternary structure, homodimer. The cofactor is Mg(2+).

Its subcellular location is the cytoplasm. It catalyses the reaction (7R,8S)-7,8-diammoniononanoate + CO2 + ATP = (4R,5S)-dethiobiotin + ADP + phosphate + 3 H(+). It functions in the pathway cofactor biosynthesis; biotin biosynthesis; biotin from 7,8-diaminononanoate: step 1/2. In terms of biological role, catalyzes a mechanistically unusual reaction, the ATP-dependent insertion of CO2 between the N7 and N8 nitrogen atoms of 7,8-diaminopelargonic acid (DAPA, also called 7,8-diammoniononanoate) to form a ureido ring. This chain is ATP-dependent dethiobiotin synthetase BioD, found in Thermodesulfovibrio yellowstonii (strain ATCC 51303 / DSM 11347 / YP87).